We begin with the raw amino-acid sequence, 424 residues long: Serine--tRNA ligase (424 aa).

Position 230-232 (230-232 (TAE)) interacts with L-serine. An ATP-binding site is contributed by 261–263 (RSE). Glu-284 contacts L-serine. 348 to 351 (EISS) contacts ATP. Residue Ser-384 participates in L-serine binding.

This sequence belongs to the class-II aminoacyl-tRNA synthetase family. Type-1 seryl-tRNA synthetase subfamily. Homodimer. The tRNA molecule binds across the dimer.

It localises to the cytoplasm. The enzyme catalyses tRNA(Ser) + L-serine + ATP = L-seryl-tRNA(Ser) + AMP + diphosphate + H(+). It carries out the reaction tRNA(Sec) + L-serine + ATP = L-seryl-tRNA(Sec) + AMP + diphosphate + H(+). Its pathway is aminoacyl-tRNA biosynthesis; selenocysteinyl-tRNA(Sec) biosynthesis; L-seryl-tRNA(Sec) from L-serine and tRNA(Sec): step 1/1. Catalyzes the attachment of serine to tRNA(Ser). Is also able to aminoacylate tRNA(Sec) with serine, to form the misacylated tRNA L-seryl-tRNA(Sec), which will be further converted into selenocysteinyl-tRNA(Sec). The chain is Serine--tRNA ligase from Nitratidesulfovibrio vulgaris (strain ATCC 29579 / DSM 644 / CCUG 34227 / NCIMB 8303 / VKM B-1760 / Hildenborough) (Desulfovibrio vulgaris).